Reading from the N-terminus, the 306-residue chain is Phosphatidate cytidylyltransferase (306 aa).

Residues 1–28 (MTTNDAGTGNPAEQPARGAKQQPATETS) form a disordered region. The next 8 membrane-spanning stretches (helical) occupy residues 36–56 (AAIVVGLSIGLVLIAVLVFVP), 82–102 (GYLIPVIPLLIGGQAAVWLTW), 103–123 (PFGAVGALAGFGGMVVVCMIW), 151–171 (ATVFLAVWVPLFCSFGAMLVY), 180–200 (FCMMIAVIASDVGGYAVGVLF), 218–238 (FAGSLVCGITATIITATFLVG), 241–261 (PWIGALLGVLFVLTTALGDLV), and 285–305 (MDRLDGILPSAVAAWIVLTLL).

Belongs to the CDS family.

Its subcellular location is the cell membrane. It catalyses the reaction a 1,2-diacyl-sn-glycero-3-phosphate + CTP + H(+) = a CDP-1,2-diacyl-sn-glycerol + diphosphate. Its pathway is phospholipid metabolism; CDP-diacylglycerol biosynthesis; CDP-diacylglycerol from sn-glycerol 3-phosphate: step 3/3. This chain is Phosphatidate cytidylyltransferase (cdsA), found in Mycobacterium bovis (strain ATCC BAA-935 / AF2122/97).